A 233-amino-acid polypeptide reads, in one-letter code: 2-C-methyl-D-erythritol 4-phosphate cytidylyltransferase (233 aa).

This sequence belongs to the IspD/TarI cytidylyltransferase family. IspD subfamily.

It catalyses the reaction 2-C-methyl-D-erythritol 4-phosphate + CTP + H(+) = 4-CDP-2-C-methyl-D-erythritol + diphosphate. The protein operates within isoprenoid biosynthesis; isopentenyl diphosphate biosynthesis via DXP pathway; isopentenyl diphosphate from 1-deoxy-D-xylulose 5-phosphate: step 2/6. Its function is as follows. Catalyzes the formation of 4-diphosphocytidyl-2-C-methyl-D-erythritol from CTP and 2-C-methyl-D-erythritol 4-phosphate (MEP). In Vibrio atlanticus (strain LGP32) (Vibrio splendidus (strain Mel32)), this protein is 2-C-methyl-D-erythritol 4-phosphate cytidylyltransferase.